The primary structure comprises 512 residues: Envelope glycoprotein (512 aa).

A signal peptide spans 1-15 (MFLQTALLLLSLGVA). N-linked (GlcNAc...) asparagine; by host glycosylation is found at asparagine 185, asparagine 263, asparagine 289, asparagine 378, and asparagine 416. A helical membrane pass occupies residues 479–502 (GQLGGLLYGNIGVYLLIAFAFVLL).

The protein localises to the virion membrane. Attaches the virus to host cellular receptor and later induces fusion of virion with host membrane. This is Envelope glycoprotein from Thogoto virus (isolate SiAr 126) (Tho).